The sequence spans 267 residues: Putative carbamate hydrolase RutD (267 aa).

The region spanning 14–115 is the AB hydrolase-1 domain; it reads PVMVMISGLG…SALVIINGWL (102 aa).

This sequence belongs to the AB hydrolase superfamily. Hydrolase RutD family.

The enzyme catalyses carbamate + 2 H(+) = NH4(+) + CO2. Functionally, involved in pyrimidine catabolism. May facilitate the hydrolysis of carbamate, a reaction that can also occur spontaneously. This chain is Putative carbamate hydrolase RutD, found in Cronobacter turicensis (strain DSM 18703 / CCUG 55852 / LMG 23827 / z3032).